We begin with the raw amino-acid sequence, 85 residues long: MKTFSVAVAVAVVLAFICLQESSAVPVTEVQELEEPMSNEYQEMPVESWKMPYNNRHKRHSSPGGCRFCCNCCPNMSGCGVCCRF.

The signal sequence occupies residues 1–24 (MKTFSVAVAVAVVLAFICLQESSA). Positions 25–64 (VPVTEVQELEEPMSNEYQEMPVESWKMPYNNRHKRHSSPG) are excised as a propeptide. Cystine bridges form between cysteine 66-cysteine 83, cysteine 69-cysteine 72, cysteine 70-cysteine 79, and cysteine 73-cysteine 82.

Predominantly expressed in liver.

Its subcellular location is the secreted. Seems to act as a signaling molecule involved in the maintenance of iron homeostasis. Seems to be required in conjunction with HFE to regulate both intestinal iron absorption and iron storage in macrophages. Functionally, antimicrobial activity against Gram-negative bacteria such as E.coli. The chain is Hepcidin (hamp) from Morone chrysops x Morone saxatilis (White bass x Striped bass).